The primary structure comprises 334 residues: Trans-1,2-dihydrobenzene-1,2-diol dehydrogenase (334 aa).

The protein belongs to the Gfo/Idh/MocA family. As to quaternary structure, homodimer. In terms of tissue distribution, kidney.

It carries out the reaction (1R,2R)-1,2-dihydrobenzene-1,2-diol + NADP(+) = catechol + NADPH + H(+). The catalysed reaction is D-xylose + NADP(+) = D-xylono-1,5-lactone + NADPH + H(+). The polypeptide is Trans-1,2-dihydrobenzene-1,2-diol dehydrogenase (DHDH) (Macaca fascicularis (Crab-eating macaque)).